A 175-amino-acid polypeptide reads, in one-letter code: Isopentenyl-diphosphate Delta-isomerase (175 aa).

Residues His-23 and His-30 each contribute to the Mn(2+) site. A Nudix hydrolase domain is found at 28 to 162 (TLHLAFCVFV…PLRYTPWFRR (135 aa)). The active site involves Cys-65. A Mn(2+)-binding site is contributed by His-67. Glu-85 lines the Mg(2+) pocket. 2 residues coordinate Mn(2+): Glu-111 and Glu-113. Glu-113 is an active-site residue.

This sequence belongs to the IPP isomerase type 1 family. The cofactor is Mg(2+). It depends on Mn(2+) as a cofactor.

It is found in the cytoplasm. It carries out the reaction isopentenyl diphosphate = dimethylallyl diphosphate. Its pathway is isoprenoid biosynthesis; dimethylallyl diphosphate biosynthesis; dimethylallyl diphosphate from isopentenyl diphosphate: step 1/1. Its function is as follows. Catalyzes the 1,3-allylic rearrangement of the homoallylic substrate isopentenyl (IPP) to its highly electrophilic allylic isomer, dimethylallyl diphosphate (DMAPP). This Halorhodospira halophila (strain DSM 244 / SL1) (Ectothiorhodospira halophila (strain DSM 244 / SL1)) protein is Isopentenyl-diphosphate Delta-isomerase.